Here is a 226-residue protein sequence, read N- to C-terminus: MQIKVINETNKTVQIFQCAKVKHRALAWLCDVFLLAIVLVVIFLITQAFSDNRFLLFLVLSCSQTILWTVYFIFLPFFWDGKTLFRNLLKIKLFAFDKRFLRIMIHELFLWILLSVLFLVIASYFFINQNSSEALNFFTNLDKPNAIAITIRTITILISFLQLIFIGYFCFSSEKQALQEILSNTFMVQEKHTLKSKPTSLKTNNQPDPANLPGVIALDEVEKLIN.

The next 4 helical transmembrane spans lie at 25–45, 54–74, 107–127, and 153–173; these read ALAWLCDVFLLAIVLVVIFLI, FLLFLVLSCSQTILWTVYFIF, ELFLWILLSVLFLVIASYFFI, and TITILISFLQLIFIGYFCFSS.

It is found in the cell membrane. This is an uncharacterized protein from Mycoplasma genitalium (strain ATCC 33530 / DSM 19775 / NCTC 10195 / G37) (Mycoplasmoides genitalium).